Here is a 350-residue protein sequence, read N- to C-terminus: Protein Wnt-2 (350 aa).

An N-terminal signal peptide occupies residues 1-25 (MNFLPNGICFYLSVAICWFSSRVDA). 11 cysteine pairs are disulfide-bonded: Cys-74/Cys-85, Cys-125/Cys-133, Cys-135/Cys-155, Cys-204/Cys-218, Cys-206/Cys-213, Cys-276/Cys-307, Cys-292/Cys-302, Cys-306/Cys-346, Cys-322/Cys-337, Cys-324/Cys-334, and Cys-329/Cys-330. Asn-132 is a glycosylation site (N-linked (GlcNAc...) asparagine). A lipid anchor (O-palmitoleoyl serine; by PORCN) is attached at Ser-210. An N-linked (GlcNAc...) asparagine glycan is attached at Asn-293.

The protein belongs to the Wnt family. Palmitoleoylation is required for efficient binding to frizzled receptors. Depalmitoleoylation leads to Wnt signaling pathway inhibition.

The protein localises to the secreted. The protein resides in the extracellular space. It is found in the extracellular matrix. Ligand for members of the frizzled family of seven transmembrane receptors. Functions in the canonical Wnt signaling pathway that results in activation of transcription factors of the TCF/LEF family. The chain is Protein Wnt-2 (wnt2) from Danio rerio (Zebrafish).